The primary structure comprises 1095 residues: Mediator of RNA polymerase II transcription subunit 15 (1095 aa).

Positions 66–83 (KSKIDAMRSTRDKRKRES) are enriched in basic and acidic residues. 6 disordered regions span residues 66-197 (KSKI…LTQQ), 265-323 (QQQQ…RNPN), 448-508 (SAAD…LNPT), 633-672 (QQQQ…KNQT), 737-847 (PTMA…QPGN), and 1050-1075 (SEAA…SMAG). Composition is skewed to low complexity over residues 99–113 (NNNN…NNLN) and 133–154 (NSNA…PNGN). A compositionally biased stretch (polar residues) spans 155-165 (DGTANPQMFMN). The span at 166 to 178 (QQAQARQQAAARQ) shows a compositional bias: low complexity. Residues 448 to 473 (SAADSTMNNSNQPMNIGNNGVNMIPN) are compositionally biased toward polar residues. Low complexity-rich tracts occupy residues 487-500 (QTPQ…QSNR), 633-662 (QQQQ…MQQA), and 780-793 (PTPQ…PSTT). Composition is skewed to polar residues over residues 794-810 (NLSA…SATP), 817-847 (PKST…QPGN), and 1050-1062 (SEAA…SSLM).

This sequence belongs to the Mediator complex subunit 15 family. In terms of assembly, component of the Mediator complex.

The protein resides in the nucleus. In terms of biological role, component of the Mediator complex, a coactivator involved in regulated gene transcription of nearly all RNA polymerase II-dependent genes. Mediator functions as a bridge to convey information from gene-specific regulatory proteins to the basal RNA polymerase II transcription machinery. Mediator is recruited to promoters by direct interactions with regulatory proteins and serves as a scaffold for the assembly of a functional preinitiation complex with RNA polymerase II and the general transcription factors. This chain is Mediator of RNA polymerase II transcription subunit 15 (GAL11), found in Candida glabrata (strain ATCC 2001 / BCRC 20586 / JCM 3761 / NBRC 0622 / NRRL Y-65 / CBS 138) (Yeast).